Reading from the N-terminus, the 473-residue chain is Arginine biosynthesis bifunctional protein ArgJ, mitochondrial (473 aa).

Residues T201, K230, T241, E328, N468, and T473 each coordinate substrate. Catalysis depends on T241, which acts as the Nucleophile.

It belongs to the ArgJ family. In terms of assembly, heterodimer of an alpha and a beta chain. Post-translationally, the alpha and beta chains are autoproteolytically processed from a single precursor protein within the mitochondrion.

It is found in the mitochondrion matrix. It carries out the reaction N(2)-acetyl-L-ornithine + L-glutamate = N-acetyl-L-glutamate + L-ornithine. The catalysed reaction is L-glutamate + acetyl-CoA = N-acetyl-L-glutamate + CoA + H(+). It functions in the pathway amino-acid biosynthesis; L-arginine biosynthesis; L-ornithine and N-acetyl-L-glutamate from L-glutamate and N(2)-acetyl-L-ornithine (cyclic): step 1/1. It participates in amino-acid biosynthesis; L-arginine biosynthesis; N(2)-acetyl-L-ornithine from L-glutamate: step 1/4. Catalyzes two activities which are involved in the cyclic version of arginine biosynthesis: the synthesis of acetylglutamate from glutamate and acetyl-CoA, and of ornithine by transacetylation between acetylornithine and glutamate. The polypeptide is Arginine biosynthesis bifunctional protein ArgJ, mitochondrial (Ajellomyces capsulatus (strain H143) (Darling's disease fungus)).